We begin with the raw amino-acid sequence, 237 residues long: Probable GTP-binding protein EngB (237 aa).

The region spanning 23–209 (AVPEVAFAGR…QAVIAGWLNL (187 aa)) is the EngB-type G domain. Residues 31-38 (GRSNAGKS), 58-62 (GRTQH), 82-85 (DLPG), 149-152 (TKAD), and 187-190 (LFSS) each bind GTP. 2 residues coordinate Mg(2+): serine 38 and threonine 60. The tract at residues 214 to 237 (KAEREPAAANSVPPAVPPASDPAA) is disordered. Residues 227 to 237 (PAVPPASDPAA) are compositionally biased toward pro residues.

It belongs to the TRAFAC class TrmE-Era-EngA-EngB-Septin-like GTPase superfamily. EngB GTPase family. Mg(2+) is required as a cofactor.

Necessary for normal cell division and for the maintenance of normal septation. The protein is Probable GTP-binding protein EngB of Cupriavidus taiwanensis (strain DSM 17343 / BCRC 17206 / CCUG 44338 / CIP 107171 / LMG 19424 / R1) (Ralstonia taiwanensis (strain LMG 19424)).